The chain runs to 122 residues: Hexon-interlacing protein (122 aa).

Positions 72 to 106 form a coiled coil; the sequence is VTELNESIDELQQKMTELEKRLKIMEEKIEEIKLA.

Belongs to the adenoviridae hexon-interlacing protein family. In terms of assembly, homotrimer. Interacts with hexon protein; this interaction tethers the hexons together. Self-interacts with adjacent proteins. Interacts with kinesin light chain KLC1; this interaction leads to capsid disruption at the nuclear pore complex during virus entry into host cell.

The protein localises to the virion. It is found in the host nucleus. Its function is as follows. Structural component of the virion that acts as a cement protein on the capsid exterior and forms triskelion structures consisting of three molecules that stabilize three hexon trimers at the center of each icosahedral facet and fixes the peripentonal hexons. Dispensable for assembly. During virus entry, recruits the anterograde motor kinesin-1 to the capsid docked at the nuclear pore complex thereby subjecting the docked capsid to a pulling force. The resulting tension leads to capsid disruption, dispersion of capsid fragments toward cell periphery and eventually viral DNA entry into the host nucleus. The polypeptide is Hexon-interlacing protein (Tupaiidae (tree shrews)).